Consider the following 153-residue polypeptide: Protein E6 (153 aa).

Zinc fingers lie at residues 29–65 (CVWC…CGKC) and 102–138 (CYIC…CMNC).

This sequence belongs to the papillomaviridae E6 protein family. In terms of assembly, forms homodimers. Interacts with ubiquitin-protein ligase UBE3A/E6-AP; this interaction stimulates UBE3A ubiquitin activity. Interacts with host TP53 and EP300; this interaction inhibits TP53 activity.

The protein localises to the host cytoplasm. It is found in the host nucleus. Functionally, plays a major role in the induction and maintenance of cellular transformation. E6 associates with host UBE3A/E6-AP ubiquitin-protein ligase and modulates its activity. Sequesters tumor suppressor TP53 in the host cytoplasm and modulates its activity by interacting with host EP300 that results in the reduction of TP53 acetylation and activation. In turn, apoptosis induced by DNA damage is inhibited. E6 also protects host keratinocytes from apoptosis by mediating the degradation of host BAK1. May also inhibit host immune response. The chain is Protein E6 from Human papillomavirus type 2a.